A 311-amino-acid chain; its full sequence is Lipoyl synthase (311 aa).

[4Fe-4S] cluster-binding residues include Cys-47, Cys-52, Cys-58, Cys-73, Cys-77, Cys-80, and Ser-286. A Radical SAM core domain is found at 59–276 (WSRHTATYLA…RSVGESLGLF (218 aa)).

This sequence belongs to the radical SAM superfamily. Lipoyl synthase family. [4Fe-4S] cluster is required as a cofactor.

It localises to the cytoplasm. The enzyme catalyses [[Fe-S] cluster scaffold protein carrying a second [4Fe-4S](2+) cluster] + N(6)-octanoyl-L-lysyl-[protein] + 2 oxidized [2Fe-2S]-[ferredoxin] + 2 S-adenosyl-L-methionine + 4 H(+) = [[Fe-S] cluster scaffold protein] + N(6)-[(R)-dihydrolipoyl]-L-lysyl-[protein] + 4 Fe(3+) + 2 hydrogen sulfide + 2 5'-deoxyadenosine + 2 L-methionine + 2 reduced [2Fe-2S]-[ferredoxin]. Its pathway is protein modification; protein lipoylation via endogenous pathway; protein N(6)-(lipoyl)lysine from octanoyl-[acyl-carrier-protein]: step 2/2. Catalyzes the radical-mediated insertion of two sulfur atoms into the C-6 and C-8 positions of the octanoyl moiety bound to the lipoyl domains of lipoate-dependent enzymes, thereby converting the octanoylated domains into lipoylated derivatives. This Chlamydia trachomatis serovar D (strain ATCC VR-885 / DSM 19411 / UW-3/Cx) protein is Lipoyl synthase.